The primary structure comprises 451 residues: Tubulin alpha-2 chain (451 aa).

8 residues coordinate GTP: glutamine 12, aspartate 73, serine 142, glycine 146, threonine 147, threonine 181, asparagine 208, and asparagine 230. Mg(2+) is bound at residue aspartate 73. Residue glutamate 256 is part of the active site.

This sequence belongs to the tubulin family. In terms of assembly, dimer of alpha and beta chains. A typical microtubule is a hollow water-filled tube with an outer diameter of 25 nm and an inner diameter of 15 nM. Alpha-beta heterodimers associate head-to-tail to form protofilaments running lengthwise along the microtubule wall with the beta-tubulin subunit facing the microtubule plus end conferring a structural polarity. Microtubules usually have 13 protofilaments but different protofilament numbers can be found in some organisms and specialized cells. Mg(2+) is required as a cofactor.

The protein localises to the cytoplasm. Its subcellular location is the cytoskeleton. The catalysed reaction is GTP + H2O = GDP + phosphate + H(+). Its function is as follows. Tubulin is the major constituent of microtubules, a cylinder consisting of laterally associated linear protofilaments composed of alpha- and beta-tubulin heterodimers. Microtubules grow by the addition of GTP-tubulin dimers to the microtubule end, where a stabilizing cap forms. Below the cap, tubulin dimers are in GDP-bound state, owing to GTPase activity of alpha-tubulin. The chain is Tubulin alpha-2 chain (tubB) from Emericella nidulans (strain FGSC A4 / ATCC 38163 / CBS 112.46 / NRRL 194 / M139) (Aspergillus nidulans).